Consider the following 221-residue polypeptide: uncharacterized protein (221 aa).

Residues 1–11 (MGEKSRRKGPA) are compositionally biased toward basic residues. 2 disordered regions span residues 1–23 (MGEK…GRTC) and 139–169 (SNFQ…SAPE). Basic and acidic residues-rich tracts occupy residues 13–23 (RHADGKLGRTC) and 155–168 (DKRS…RSAP).

This is an uncharacterized protein from Homo sapiens (Human).